Consider the following 663-residue polypeptide: DNA ligase 1 (663 aa).

Residues 28 to 32 (DKEYD) and 76 to 77 (SL) contribute to the NAD(+) site. The N6-AMP-lysine intermediate role is filled by Lys-118. NAD(+) is bound by residues Arg-139, Glu-173, and Lys-310. Residues Cys-403, Cys-406, Cys-419, and Cys-425 each contribute to the Zn(2+) site. The 81-residue stretch at 583-663 (VSESVFNDKT…KFEELIESVK (81 aa)) folds into the BRCT domain.

This sequence belongs to the NAD-dependent DNA ligase family. LigA subfamily. Mg(2+) is required as a cofactor. Requires Mn(2+) as cofactor.

It catalyses the reaction NAD(+) + (deoxyribonucleotide)n-3'-hydroxyl + 5'-phospho-(deoxyribonucleotide)m = (deoxyribonucleotide)n+m + AMP + beta-nicotinamide D-nucleotide.. Its function is as follows. DNA ligase that catalyzes the formation of phosphodiester linkages between 5'-phosphoryl and 3'-hydroxyl groups in double-stranded DNA using NAD as a coenzyme and as the energy source for the reaction. It is essential for DNA replication and repair of damaged DNA. In Clostridium acetobutylicum (strain ATCC 824 / DSM 792 / JCM 1419 / IAM 19013 / LMG 5710 / NBRC 13948 / NRRL B-527 / VKM B-1787 / 2291 / W), this protein is DNA ligase 1.